The following is a 542-amino-acid chain: MFS-type efflux pump MMF1 (542 aa).

The next 8 helical transmembrane spans lie at W24 to I44, I51 to L71, V98 to V118, G124 to L144, F151 to V171, W179 to L199, L215 to T235, and V248 to I268. N285 is a glycosylation site (N-linked (GlcNAc...) asparagine). Helical transmembrane passes span F296–I316, I326–I346, L355–V375, I384–I404, A419–F439, and I490–L510.

Belongs to the major facilitator superfamily.

Its subcellular location is the cell membrane. Its function is as follows. Glycosyltransferase; part of the gene cluster that mediates the biosynthesis of mannosylerythritol lipids (MELs), surface-active substances that enhance the availability of water-insoluble substrates. MMF1 is directly involved in the secretiopn of MALs. This is MFS-type efflux pump MMF1 from Pseudozyma antarctica (strain T-34) (Yeast).